We begin with the raw amino-acid sequence, 189 residues long: Phosphoheptose isomerase (189 aa).

The 156-residue stretch at 34–189 (LADSLAGGRK…CDLVEKRLFP (156 aa)) folds into the SIS domain. 49-51 (NGG) is a substrate binding site. Zn(2+)-binding residues include H58 and E62. Substrate is bound by residues E62, 91–92 (ND), 117–119 (STS), S122, and Q169. The Zn(2+) site is built by Q169 and H177.

The protein belongs to the SIS family. GmhA subfamily. As to quaternary structure, homotetramer. Requires Zn(2+) as cofactor.

It is found in the cytoplasm. It carries out the reaction 2 D-sedoheptulose 7-phosphate = D-glycero-alpha-D-manno-heptose 7-phosphate + D-glycero-beta-D-manno-heptose 7-phosphate. The protein operates within carbohydrate biosynthesis; D-glycero-D-manno-heptose 7-phosphate biosynthesis; D-glycero-alpha-D-manno-heptose 7-phosphate and D-glycero-beta-D-manno-heptose 7-phosphate from sedoheptulose 7-phosphate: step 1/1. Catalyzes the isomerization of sedoheptulose 7-phosphate in D-glycero-D-manno-heptose 7-phosphate. In Geobacter sulfurreducens (strain ATCC 51573 / DSM 12127 / PCA), this protein is Phosphoheptose isomerase.